The chain runs to 859 residues: Leucine--tRNA ligase (859 aa).

The 'HIGH' region signature appears at 42 to 52 (PYPSGRLHMGH). The short motif at 618–622 (KMSKS) is the 'KMSKS' region element. Lysine 621 contacts ATP.

Belongs to the class-I aminoacyl-tRNA synthetase family.

It is found in the cytoplasm. The enzyme catalyses tRNA(Leu) + L-leucine + ATP = L-leucyl-tRNA(Leu) + AMP + diphosphate. The protein is Leucine--tRNA ligase of Shewanella baltica (strain OS223).